Here is a 257-residue protein sequence, read N- to C-terminus: Expansin-A10 (257 aa).

A signal peptide spans 1-18 (MAPCLLLVLFLLPALATG). The Expansin-like EG45 domain maps to 50-163 (GGACGFGDLG…RRVNCLRDGG (114 aa)). One can recognise an Expansin-like CBD domain in the interval 173-252 (FFLTVLISNV…EWDFGKTYTG (80 aa)).

This sequence belongs to the expansin family. Expansin A subfamily. As to expression, expressed in panicles and flowers.

The protein resides in the secreted. The protein localises to the cell wall. It localises to the membrane. Its function is as follows. May cause loosening and extension of plant cell walls by disrupting non-covalent bonding between cellulose microfibrils and matrix glucans. No enzymatic activity has been found. May be required for rapid internodal elongation in deepwater rice during submergence. The protein is Expansin-A10 (EXPA10) of Oryza sativa subsp. japonica (Rice).